The chain runs to 404 residues: Cysteine desulfurase IscS (404 aa).

Residues 75-76 (AT), asparagine 155, glutamine 183, and 203-205 (SAH) contribute to the pyridoxal 5'-phosphate site. Lysine 206 bears the N6-(pyridoxal phosphate)lysine mark. Threonine 243 is a binding site for pyridoxal 5'-phosphate. Cysteine 328 functions as the Cysteine persulfide intermediate in the catalytic mechanism. Cysteine 328 contacts [2Fe-2S] cluster.

It belongs to the class-V pyridoxal-phosphate-dependent aminotransferase family. NifS/IscS subfamily. In terms of assembly, homodimer. Forms a heterotetramer with IscU, interacts with other sulfur acceptors. The cofactor is pyridoxal 5'-phosphate.

It localises to the cytoplasm. It catalyses the reaction (sulfur carrier)-H + L-cysteine = (sulfur carrier)-SH + L-alanine. The protein operates within cofactor biosynthesis; iron-sulfur cluster biosynthesis. Functionally, master enzyme that delivers sulfur to a number of partners involved in Fe-S cluster assembly, tRNA modification or cofactor biosynthesis. Catalyzes the removal of elemental sulfur atoms from cysteine to produce alanine. Functions as a sulfur delivery protein for Fe-S cluster synthesis onto IscU, an Fe-S scaffold assembly protein, as well as other S acceptor proteins. This Shewanella loihica (strain ATCC BAA-1088 / PV-4) protein is Cysteine desulfurase IscS.